The primary structure comprises 468 residues: BTB/POZ domain-containing protein 17 (468 aa).

Residues 1-16 form the signal peptide; that stretch reads MRRFCVVPLLLVLVEA. The BTB domain occupies 51-120; it reads TDTILRIRTA…FYCGEISVNL (70 aa). A BACK domain is found at 159 to 259; sequence VVSWYHYALR…ISPSQLFQIQ (101 aa).

The protein localises to the secreted. This is BTB/POZ domain-containing protein 17 (btbd17) from Xenopus tropicalis (Western clawed frog).